The primary structure comprises 617 residues: MFSLSLIQPRLRISEIPVTQSYKSPTICYSSDSRTKREEQRHVRLPGFRLVSGKRASFDSGFSGFKGENVNQDDSSSFDSERVDYALLAEWLQSSNGMRLIKRIHAMALKCFDDQVIYFGNNLISSCVRLGDLVYARKVFDSMPEKNTVTWTAMIDGYLKYGLEDEAFALFEDYVKHGIRFTNERMFVCLLNLCSRRAEFELGRQVHGNMVKVGVGNLIVESSLVYFYAQCGELTSALRAFDMMEEKDVISWTAVISACSRKGHGIKAIGMFIGMLNHWFLPNEFTVCSILKACSEEKALRFGRQVHSLVVKRMIKTDVFVGTSLMDMYAKCGEISDCRKVFDGMSNRNTVTWTSIIAAHAREGFGEEAISLFRIMKRRHLIANNLTVVSILRACGSVGALLLGKELHAQIIKNSIEKNVYIGSTLVWLYCKCGESRDAFNVLQQLPSRDVVSWTAMISGCSSLGHESEALDFLKEMIQEGVEPNPFTYSSALKACANSESLLIGRSIHSIAKKNHALSNVFVGSALIHMYAKCGFVSEAFRVFDSMPEKNLVSWKAMIMGYARNGFCREALKLMYRMEAEGFEVDDYIFATILSTCGDIELDEAVESSATCYLETS.

The N-terminal 19 residues, 1-19 (MFSLSLIQPRLRISEIPVT), are a transit peptide targeting the chloroplast. PPR repeat units lie at residues 116 to 146 (VIYF…MPEK), 147 to 181 (NTVT…GIRF), 183 to 217 (NERM…GVGN), 222 to 247 (SSLV…MEEK), 248 to 282 (DVIS…WFLP), 283 to 317 (NEFT…MIKT), 318 to 348 (DVFV…MSNR), 349 to 383 (NTVT…HLIA), 384 to 418 (NNLT…SIEK), 419 to 449 (NVYI…LPSR), 450 to 484 (DVVS…GVEP), 485 to 519 (NPFT…HALS), 520 to 550 (NVFV…MPEK), and 551 to 585 (NLVS…GFEV).

It belongs to the PPR family. PCMP-A subfamily. In terms of assembly, interacts with MORF8/RIP1, MORF2/RIP2 and MORF9/RIP9. Expressed specifically in aerial greening tissues, such as cotyledons, rosette leaves, cauline leaves, stems, sepals, stamens, carpels and siliques.

The protein localises to the plastid. It is found in the chloroplast. In terms of biological role, required for proper chloroplast development. Involved in the regulation of plastid gene expression probably through regulation of plastid-encoded polymerase (PEP) dependent chloroplast transcription. Required for RNA editing of several chloroplastic transcripts, especially accD transcripts. Required for processing of the chloroplastic rpoA pre-mRNA. Required for the monocistronic rpoA transcript processing from the rpl23-rpl2-rps19-rpl22-rps3-rpl16-rpl14-rps8-rpl36-rps11-rpoA polycistron. Binds the intergenic sequence of rps11-rpoA for rpoA monocistronic RNA cleavage. This chain is Pentatricopeptide repeat-containing protein At4g18520, chloroplastic (PCMP-A2), found in Arabidopsis thaliana (Mouse-ear cress).